We begin with the raw amino-acid sequence, 269 residues long: Energy-coupling factor transporter ATP-binding protein EcfA1 (269 aa).

The ABC transporter domain occupies 8-242 (IVFKNVSFQY…AEELTTIGLD (235 aa)). Residue 42–49 (GHNGSGKS) coordinates ATP.

The protein belongs to the ABC transporter superfamily. Energy-coupling factor EcfA family. In terms of assembly, forms a stable energy-coupling factor (ECF) transporter complex composed of 2 membrane-embedded substrate-binding proteins (S component), 2 ATP-binding proteins (A component) and 2 transmembrane proteins (T component).

The protein resides in the cell membrane. Its function is as follows. ATP-binding (A) component of a common energy-coupling factor (ECF) ABC-transporter complex. Unlike classic ABC transporters this ECF transporter provides the energy necessary to transport a number of different substrates. The sequence is that of Energy-coupling factor transporter ATP-binding protein EcfA1 from Staphylococcus aureus (strain MRSA252).